The chain runs to 295 residues: Putative attaching and effacing protein homolog (295 aa).

The first 25 residues, 1 to 25, serve as a signal peptide directing secretion; it reads MSHYKTGHKQPRFRYSVLARCVAWA.

The protein belongs to the intimin/invasin family.

The polypeptide is Putative attaching and effacing protein homolog (eaeH) (Escherichia coli (strain K12)).